The following is a 257-amino-acid chain: Pyridoxal phosphate homeostasis protein (257 aa).

The residue at position 2 (S2) is an N-acetylserine. The residue at position 49 (K49) is an N6-(pyridoxal phosphate)lysine.

This sequence belongs to the pyridoxal phosphate-binding protein YggS/PROSC family.

The protein resides in the cytoplasm. The protein localises to the nucleus. In terms of biological role, pyridoxal 5'-phosphate (PLP)-binding protein, which may be involved in intracellular homeostatic regulation of pyridoxal 5'-phosphate (PLP), the active form of vitamin B6. The sequence is that of Pyridoxal phosphate homeostasis protein from Saccharomyces cerevisiae (strain ATCC 204508 / S288c) (Baker's yeast).